A 410-amino-acid polypeptide reads, in one-letter code: 3-phosphoshikimate 1-carboxyvinyltransferase (410 aa).

Positions 27, 28, and 32 each coordinate 3-phosphoshikimate. Residue K27 coordinates phosphoenolpyruvate. G91 and R119 together coordinate phosphoenolpyruvate. The 3-phosphoshikimate site is built by S161, S162, Q163, D297, Q319, and K323. Position 163 (Q163) interacts with phosphoenolpyruvate. D297 functions as the Proton acceptor in the catalytic mechanism. Phosphoenolpyruvate-binding residues include R327, R368, and K394.

Belongs to the EPSP synthase family. Monomer.

The protein resides in the cytoplasm. The catalysed reaction is 3-phosphoshikimate + phosphoenolpyruvate = 5-O-(1-carboxyvinyl)-3-phosphoshikimate + phosphate. The protein operates within metabolic intermediate biosynthesis; chorismate biosynthesis. Catalyzes the transfer of the enolpyruvyl moiety of phosphoenolpyruvate (PEP) to the 5-hydroxyl of shikimate-3-phosphate (S3P) to produce enolpyruvyl shikimate-3-phosphate and inorganic phosphate. The protein is 3-phosphoshikimate 1-carboxyvinyltransferase of Pyrococcus abyssi (strain GE5 / Orsay).